A 91-amino-acid polypeptide reads, in one-letter code: Large ribosomal subunit protein uL23 (91 aa).

Belongs to the universal ribosomal protein uL23 family. In terms of assembly, part of the 50S ribosomal subunit. Contacts protein L29, and trigger factor when it is bound to the ribosome.

Its function is as follows. One of the early assembly proteins it binds 23S rRNA. One of the proteins that surrounds the polypeptide exit tunnel on the outside of the ribosome. Forms the main docking site for trigger factor binding to the ribosome. The sequence is that of Large ribosomal subunit protein uL23 from Macrococcus caseolyticus (strain JCSC5402) (Macrococcoides caseolyticum).